Reading from the N-terminus, the 484-residue chain is Threonine synthase-like 2 (484 aa).

At K113 the chain carries N6-(pyridoxal phosphate)lysine.

Belongs to the threonine synthase family. It depends on pyridoxal 5'-phosphate as a cofactor.

Its function is as follows. Acts as a catabolic phospho-lyase on both gamma- and beta-phosphorylated substrates. Degrades O-phospho-threonine (PThr) to alpha-ketobutyrate, ammonia and phosphate. This Pongo abelii (Sumatran orangutan) protein is Threonine synthase-like 2 (THNSL2).